Consider the following 341-residue polypeptide: Glyceraldehyde-3-phosphate dehydrogenase 2 (341 aa).

NAD(+) is bound by residues 12-13, Arg-78, and Thr-120; that span reads RI. Residues 152 to 154 and Thr-183 each bind D-glyceraldehyde 3-phosphate; that span reads SCT. The Nucleophile role is filled by Cys-153. An NAD(+)-binding site is contributed by Asn-184. D-glyceraldehyde 3-phosphate-binding positions include Arg-198, 211–212, and Arg-234; that span reads TG. Residue Asn-313 coordinates NAD(+).

Belongs to the glyceraldehyde-3-phosphate dehydrogenase family. Homotetramer.

It is found in the cytoplasm. It catalyses the reaction D-glyceraldehyde 3-phosphate + phosphate + NAD(+) = (2R)-3-phospho-glyceroyl phosphate + NADH + H(+). Its pathway is carbohydrate degradation; glycolysis; pyruvate from D-glyceraldehyde 3-phosphate: step 1/5. Catalyzes the oxidative phosphorylation of glyceraldehyde 3-phosphate (G3P) to 1,3-bisphosphoglycerate (BPG) using the cofactor NAD. The first reaction step involves the formation of a hemiacetal intermediate between G3P and a cysteine residue, and this hemiacetal intermediate is then oxidized to a thioester, with concomitant reduction of NAD to NADH. The reduced NADH is then exchanged with the second NAD, and the thioester is attacked by a nucleophilic inorganic phosphate to produce BPG. This chain is Glyceraldehyde-3-phosphate dehydrogenase 2 (gapA2), found in Staphylococcus aureus (strain MRSA252).